The primary structure comprises 278 residues: Undecaprenyl-diphosphatase (278 aa).

Transmembrane regions (helical) follow at residues 49 to 69 (ANTF…VVFW), 97 to 117 (HVLI…DFID), 120 to 140 (LFSI…MIAA), 197 to 217 (ADFT…LSLV), 226 to 246 (GDLG…LLSI), and 258 to 278 (LVPF…IVYM).

Belongs to the UppP family.

It localises to the cell membrane. The catalysed reaction is di-trans,octa-cis-undecaprenyl diphosphate + H2O = di-trans,octa-cis-undecaprenyl phosphate + phosphate + H(+). Catalyzes the dephosphorylation of undecaprenyl diphosphate (UPP). Confers resistance to bacitracin. The polypeptide is Undecaprenyl-diphosphatase (Exiguobacterium sibiricum (strain DSM 17290 / CCUG 55495 / CIP 109462 / JCM 13490 / 255-15)).